A 122-amino-acid chain; its full sequence is Large ribosomal subunit protein uL18 (122 aa).

The protein belongs to the universal ribosomal protein uL18 family. Part of the 50S ribosomal subunit; part of the 5S rRNA/L5/L18/L25 subcomplex. Contacts the 5S and 23S rRNAs.

Functionally, this is one of the proteins that bind and probably mediate the attachment of the 5S RNA into the large ribosomal subunit, where it forms part of the central protuberance. In Ruminiclostridium cellulolyticum (strain ATCC 35319 / DSM 5812 / JCM 6584 / H10) (Clostridium cellulolyticum), this protein is Large ribosomal subunit protein uL18.